Here is a 211-residue protein sequence, read N- to C-terminus: MPIQEIRHPLIRHKLGLLRRAEISTKNFRELAQEVTMLLTYEATKDLQLVDHEIDGWVGKVKTQRIAGKKITIVPILRAGIGMLEGVLNLIPSAKVSVLGLERDEETLEARTYYKKLVPDVANRIAMIIDPMLATGSSLIAAIDVLKASGCKDIRVMVLVAAPEGVKKVQAKHPEVEIYTASIDDGLNEHGYIVPGLGDAGDKIFGSVQKD.

Residues R78, R103, and 130–138 (DPMLATGSS) each bind 5-phospho-alpha-D-ribose 1-diphosphate. Uracil-binding positions include I193 and 198-200 (GDA). Position 199 (D199) interacts with 5-phospho-alpha-D-ribose 1-diphosphate.

Belongs to the UPRTase family. The cofactor is Mg(2+).

The enzyme catalyses UMP + diphosphate = 5-phospho-alpha-D-ribose 1-diphosphate + uracil. The protein operates within pyrimidine metabolism; UMP biosynthesis via salvage pathway; UMP from uracil: step 1/1. With respect to regulation, allosterically activated by GTP. Catalyzes the conversion of uracil and 5-phospho-alpha-D-ribose 1-diphosphate (PRPP) to UMP and diphosphate. The polypeptide is Uracil phosphoribosyltransferase (Acinetobacter baylyi (strain ATCC 33305 / BD413 / ADP1)).